Consider the following 83-residue polypeptide: Glutaredoxin 3 (83 aa).

The 82-residue stretch at 2–83 folds into the Glutaredoxin domain; sequence ANVEIYTKET…ARGGLDPLLK (82 aa). Cysteines 12 and 15 form a disulfide.

Belongs to the glutaredoxin family. Monomer.

Its function is as follows. The disulfide bond functions as an electron carrier in the glutathione-dependent synthesis of deoxyribonucleotides by the enzyme ribonucleotide reductase. In addition, it is also involved in reducing some disulfides in a coupled system with glutathione reductase. This Escherichia coli O157:H7 protein is Glutaredoxin 3 (grxC).